Reading from the N-terminus, the 380-residue chain is DNA replication and repair protein RecF (380 aa).

30–37 (GQNGQGKT) lines the ATP pocket.

Belongs to the RecF family.

It is found in the cytoplasm. The RecF protein is involved in DNA metabolism; it is required for DNA replication and normal SOS inducibility. RecF binds preferentially to single-stranded, linear DNA. It also seems to bind ATP. The sequence is that of DNA replication and repair protein RecF from Myxococcus xanthus (strain DK1622).